A 206-amino-acid chain; its full sequence is Ribosomal RNA small subunit methyltransferase G (206 aa).

S-adenosyl-L-methionine is bound by residues Gly74, Leu79, 125 to 126 (VE), and Arg140.

This sequence belongs to the methyltransferase superfamily. RNA methyltransferase RsmG family.

It is found in the cytoplasm. It catalyses the reaction guanosine(527) in 16S rRNA + S-adenosyl-L-methionine = N(7)-methylguanosine(527) in 16S rRNA + S-adenosyl-L-homocysteine. Its function is as follows. Specifically methylates the N7 position of guanine in position 527 of 16S rRNA. The polypeptide is Ribosomal RNA small subunit methyltransferase G (Shewanella sp. (strain MR-7)).